Reading from the N-terminus, the 433-residue chain is Dihydroorotase (433 aa).

Residues His-63 and His-65 each contribute to the Zn(2+) site. Residues 65–67 (HLR) and Asn-97 each bind substrate. Zn(2+)-binding residues include Asp-155, His-182, and His-235. Asn-283 provides a ligand contact to substrate. Asp-310 contacts Zn(2+). Asp-310 is a catalytic residue. His-314 contributes to the substrate binding site.

This sequence belongs to the metallo-dependent hydrolases superfamily. DHOase family. Class I DHOase subfamily. Zn(2+) is required as a cofactor.

It carries out the reaction (S)-dihydroorotate + H2O = N-carbamoyl-L-aspartate + H(+). The protein operates within pyrimidine metabolism; UMP biosynthesis via de novo pathway; (S)-dihydroorotate from bicarbonate: step 3/3. In terms of biological role, catalyzes the reversible cyclization of carbamoyl aspartate to dihydroorotate. The chain is Dihydroorotase from Anaeromyxobacter dehalogenans (strain 2CP-1 / ATCC BAA-258).